The chain runs to 262 residues: Type III pantothenate kinase (262 aa).

Residue 12–19 (DIGNTSIA) participates in ATP binding. Substrate is bound by residues Tyr94 and 109-112 (GSDV). The active-site Proton acceptor is the Asp111. Asp132 is a binding site for K(+). ATP is bound at residue Thr135. Residue Thr187 participates in substrate binding.

It belongs to the type III pantothenate kinase family. As to quaternary structure, homodimer. NH4(+) serves as cofactor. K(+) is required as a cofactor.

Its subcellular location is the cytoplasm. It catalyses the reaction (R)-pantothenate + ATP = (R)-4'-phosphopantothenate + ADP + H(+). It participates in cofactor biosynthesis; coenzyme A biosynthesis; CoA from (R)-pantothenate: step 1/5. Its function is as follows. Catalyzes the phosphorylation of pantothenate (Pan), the first step in CoA biosynthesis. The chain is Type III pantothenate kinase from Borrelia garinii subsp. bavariensis (strain ATCC BAA-2496 / DSM 23469 / PBi) (Borreliella bavariensis).